A 1264-amino-acid polypeptide reads, in one-letter code: Valine--tRNA ligase (1264 aa).

S2 carries the N-acetylserine modification. Residues 89–219 (GSRAAVLVQQ…YSGARSVTQQ (131 aa)) enclose the GST C-terminal domain. The segment covering 218 to 230 (QQPGSEITAPQKT) has biased composition (polar residues). The disordered stretch occupies residues 218–296 (QQPGSEITAP…GEKKDVSGTM (79 aa)). Basic and acidic residues-rich tracts occupy residues 234 to 248 (LKKEAKKREKLEKFQ) and 260 to 275 (HGEKKPKPEKKEKRDP). Residues 344–354 (PNVTGSLHLGH) carry the 'HIGH' region motif. Residues S437 and S527 each carry the phosphoserine modification. An N6-acetyllysine modification is found at K645. Positions 862-866 (KMSKS) match the 'KMSKS' region motif. Residue K865 participates in ATP binding.

This sequence belongs to the class-I aminoacyl-tRNA synthetase family. Forms high-molecular-mass aggregates with elongation factor 1.

The enzyme catalyses tRNA(Val) + L-valine + ATP = L-valyl-tRNA(Val) + AMP + diphosphate. With respect to regulation, can be regulated by protein kinase C-dependent phosphorylation. This chain is Valine--tRNA ligase (Vars1), found in Rattus norvegicus (Rat).